The sequence spans 350 residues: Salicylate decarboxylase (350 aa).

The protein belongs to the metallo-dependent hydrolases superfamily. In terms of assembly, homotetramer.

It carries out the reaction salicylate + H(+) = phenol + CO2. Inhibited by AgNO(3), HgCl(2), p-chloromercuribenzoic acid and NiCl(2). Functionally, reversibly catalyzes the regioselective carboxylation of phenol to form salicylic acid. Involved in a pathway for the degradation of salicylate via phenol. Also catalyzes the decarboxylation of beta-resorcylic acid (2,4-dihydroxybenzoic acid) into resorcinol (1,3-dihydroxybenzene), gamma-resorcylic acid (2,6-dihydroxybenzoic acid) into resorcinol, 2,3-dihydroxybenzoic acid into catechol (1,2-dihydroxybenzene), and 4-aminosalicylic acid into 3-aminophenol. The polypeptide is Salicylate decarboxylase (Cutaneotrichosporon moniliiforme (Yeast)).